Consider the following 97-residue polypeptide: MTSSPVSRVVYNGKRPASNTRSPSSNEIFTPAHEENVRFIYEAWQCVERDLRNQVSGMDRGVVEEYVEKNPSNSLKSFKPIDLNDLKRRTVQDPKKS.

2 disordered regions span residues 1-29 and 72-97; these read MTSS…NEIF and SNSL…PKKS. Residues 17 to 28 are compositionally biased toward polar residues; sequence ASNTRSPSSNEI. Basic and acidic residues predominate over residues 82-97; sequence DLNDLKRRTVQDPKKS.

This sequence belongs to the MCRIP family.

The protein localises to the nucleus. The protein resides in the cytoplasm. Its subcellular location is the stress granule. Functionally, may play a role in the regulation of the epithelial-mesenchymal transition. The protein is Mapk-regulated corepressor-interacting protein 1 (Mcrip1) of Xenopus tropicalis (Western clawed frog).